The primary structure comprises 216 residues: Probable GTP-binding protein EngB (216 aa).

An EngB-type G domain is found at 43-216 (DRLEVCFAGR…TLRSIITDLT (174 aa)). Residues 51–58 (GRSNVGKS), 78–82 (GRTQE), 96–99 (DLPG), 163–166 (TKAD), and 197–199 (TSS) each bind GTP. The Mg(2+) site is built by S58 and T80.

Belongs to the TRAFAC class TrmE-Era-EngA-EngB-Septin-like GTPase superfamily. EngB GTPase family. Mg(2+) is required as a cofactor.

Functionally, necessary for normal cell division and for the maintenance of normal septation. This chain is Probable GTP-binding protein EngB, found in Roseobacter denitrificans (strain ATCC 33942 / OCh 114) (Erythrobacter sp. (strain OCh 114)).